Consider the following 259-residue polypeptide: ATP synthase subunit a (259 aa).

Residues 1 to 10 (MFNLLNTYIT) constitute a propeptide, removed in mature form. Transmembrane regions (helical) follow at residues 36–56 (LTTF…LYTL), 92–112 (WGLY…ANLI), 125–145 (LVFI…LGLY), 150–170 (VFFS…LLVI), 191–211 (ILAG…FMLI), and 216–236 (LVFG…EFAI).

It belongs to the ATPase A chain family. As to quaternary structure, F-type ATPases have 2 components, CF(1) - the catalytic core - and CF(0) - the membrane proton channel. In yeast, the dimeric form of ATP synthase consists of 17 polypeptides: alpha, beta, gamma, delta, epsilon, 4 (B), 5 (OSCP), 6 (A), 8, 9 (C), d, E (Tim11), f, g, h, i/j and k.

It localises to the mitochondrion inner membrane. Functionally, mitochondrial membrane ATP synthase (F(1)F(0) ATP synthase or Complex V) produces ATP from ADP in the presence of a proton gradient across the membrane which is generated by electron transport complexes of the respiratory chain. F-type ATPases consist of two structural domains, F(1) - containing the extramembraneous catalytic core and F(0) - containing the membrane proton channel, linked together by a central stalk and a peripheral stalk. During catalysis, ATP synthesis in the catalytic domain of F(1) is coupled via a rotary mechanism of the central stalk subunits to proton translocation. Key component of the proton channel; it may play a direct role in the translocation of protons across the membrane. This Saccharomyces cerevisiae (strain ATCC 204508 / S288c) (Baker's yeast) protein is ATP synthase subunit a (ATP6).